Here is a 218-residue protein sequence, read N- to C-terminus: dTTP/UTP pyrophosphatase (218 aa).

A compositionally biased stretch (polar residues) spans 1-10; it reads MTASPSSAEG. The segment at 1–20 is disordered; the sequence is MTASPSSAEGSSGLPDRPKL. Asp-87 (proton acceptor) is an active-site residue.

The protein belongs to the Maf family. YhdE subfamily. A divalent metal cation is required as a cofactor.

Its subcellular location is the cytoplasm. It catalyses the reaction dTTP + H2O = dTMP + diphosphate + H(+). The catalysed reaction is UTP + H2O = UMP + diphosphate + H(+). Nucleoside triphosphate pyrophosphatase that hydrolyzes dTTP and UTP. May have a dual role in cell division arrest and in preventing the incorporation of modified nucleotides into cellular nucleic acids. This chain is dTTP/UTP pyrophosphatase, found in Gluconobacter oxydans (strain 621H) (Gluconobacter suboxydans).